The primary structure comprises 894 residues: MARQKKMGQSVLRAVFFLVLGLLGHSHGGFPNTISIGGLFMRNTVQEHSAFRFAVQLYNTNQNTTEKPFHLNYHVDHLDSSNSFSVTNAFCSQFSRGVYAIFGFYDQMSMNTLTSFCGALHTSFVTPSFPTDADVQFVIQMRPALKGAILSLLGHYKWEKFVYLYDTERGFSILQAIMEAAVQNNWQVTARSVGNIKDVQEFRRIIEEMDRRQEKRYLIDCEVERINTILEQVVILGKHSRGYHYMLANLGFTDILLERVMHGGANITGFQIVNNENPMVQQFIQRWVRLDEREFPEAKNAPLKYTSALTHDAILVIAEAFRYLRRQRVDVSRRGSAGDCLANPAVPWSQGIDIERALKMVQVQGMTGNIQFDTYGRRTNYTIDVYEMKVSGSRKAGYWNEYERFVPFSDQQISNDSASSENRTIVVTTILESPYVMYKKNHEQLEGNERYEGYCVDLAYEIAKHVRIKYKLSIVGDGKYGARDPETKIWNGMVGELVYGRADIAVAPLTITLVREEVIDFSKPFMSLGISIMIKKPQKSKPGVFSFLDPLAYEIWMCIVFAYIGVSVVLFLVSRFSPYEWHLEDNNEEPRDPQSPPDPPNEFGIFNSLWFSLGAFMQQGCDISPRSLSGRIVGGVWWFFTLIIISSYTANLAAFLTVERMVSPIESAEDLAKQTEIAYGTLDSGSTKEFFRRSKIAVYEKMWSYMKSAEPSVFTKTTADGVARVRKSKGKFAFLLESTMNEYIEQRKPCDTMKVGGNLDSKGYGVATPKGSALRNAVNLAVLKLNEQGLLDKLKNKWWYDKGECGSGGGDSKDKTSALSLSNVAGVFYILVGGLGLAMMVALIEFCYKSRAESKRMKLTKNTQNFKPAPATNTQNYATYREGYNVYGTESVKI.

An N-terminal signal peptide occupies residues 1–28 (MARQKKMGQSVLRAVFFLVLGLLGHSHG). Over 29–552 (GFPNTISIGG…GVFSFLDPLA (524 aa)) the chain is Extracellular. N-linked (GlcNAc...) asparagine glycosylation is found at Asn63, Asn266, Asn380, Asn415, and Asn422. The cysteines at positions 91 and 340 are disulfide-linked. Pro508, Thr510, and Arg515 together coordinate L-glutamate. A helical transmembrane segment spans residues 553-573 (YEIWMCIVFAYIGVSVVLFLV). Residues 574–602 (SRFSPYEWHLEDNNEEPRDPQSPPDPPNE) lie on the Cytoplasmic side of the membrane. Positions 603–618 (FGIFNSLWFSLGAFMQ) form an intramembrane region, helical; Pore-forming. Residues 619 to 621 (QGC) lie within the membrane without spanning it. The S-palmitoyl cysteine moiety is linked to residue Cys621. Residues 622-627 (DISPRS) lie on the Cytoplasmic side of the membrane. Residues 628 to 648 (LSGRIVGGVWWFFTLIIISSY) form a helical membrane-spanning segment. At 649-823 (TANLAAFLTV…DKTSALSLSN (175 aa)) the chain is on the extracellular side. 3 residues coordinate L-glutamate: Ser686, Thr687, and Glu737. The cysteines at positions 750 and 805 are disulfide-linked. A helical transmembrane segment spans residues 824 to 844 (VAGVFYILVGGLGLAMMVALI). At 845 to 894 (EFCYKSRAESKRMKLTKNTQNFKPAPATNTQNYATYREGYNVYGTESVKI) the chain is on the cytoplasmic side. The S-palmitoyl cysteine moiety is linked to residue Cys847. A phosphotyrosine mark is found at Tyr877 and Tyr887.

Belongs to the glutamate-gated ion channel (TC 1.A.10.1) family. GRIA3 subfamily. As to quaternary structure, homotetramer or heterotetramer of pore-forming glutamate receptor subunits. Tetramers may be formed by the dimerization of dimers. Interacts with PICK1, GRIP1 and GRIP2. Found in a complex with GRIA1, GRIA2, GRIA4, CNIH2, CNIH3, CACNG2, CACNG3, CACNG4, CACNG5, CACNG7 and CACNG8. Interacts with CACNG5. Found in a complex with GRIA1, GRIA2, GRIA4, DLG4, CACNG8 and CNIH2.

It is found in the cell membrane. The protein resides in the postsynaptic cell membrane. Its subcellular location is the postsynaptic density membrane. It catalyses the reaction Ca(2+)(in) = Ca(2+)(out). Its function is as follows. Ionotropic glutamate receptor that functions as a ligand-gated cation channel, gated by L-glutamate and glutamatergic agonists such as alpha-amino-3-hydroxy-5-methyl-4-isoxazolepropionic acid (AMPA), quisqualic acid, and kainic acid. L-glutamate acts as an excitatory neurotransmitter at many synapses in the central nervous system and plays an important role in fast excitatory synaptic transmission by inducing long-term potentiation. Binding of the excitatory neurotransmitter L-glutamate induces a conformation change, leading to the opening of the cation channel, and thereby converts the chemical signal to an electrical impulse upon entry of calcium. The receptor then desensitizes rapidly and enters a transient inactive state, characterized by the presence of bound agonist. In the presence of CACNG8, shows resensitization which is characterized by a delayed accumulation of current flux upon continued application of glutamate. This is Glutamate receptor 3 from Homo sapiens (Human).